The chain runs to 694 residues: Elongation factor G (694 aa).

The tr-type G domain maps to 8–287 (EDYRNFGIMA…AVVEFLPAPT (280 aa)). Residues 17–24 (AHIDAGKT), 86–90 (DTPGH), and 140–143 (NKMD) each bind GTP.

The protein belongs to the TRAFAC class translation factor GTPase superfamily. Classic translation factor GTPase family. EF-G/EF-2 subfamily.

It is found in the cytoplasm. In terms of biological role, catalyzes the GTP-dependent ribosomal translocation step during translation elongation. During this step, the ribosome changes from the pre-translocational (PRE) to the post-translocational (POST) state as the newly formed A-site-bound peptidyl-tRNA and P-site-bound deacylated tRNA move to the P and E sites, respectively. Catalyzes the coordinated movement of the two tRNA molecules, the mRNA and conformational changes in the ribosome. The sequence is that of Elongation factor G from Brucella melitensis biotype 1 (strain ATCC 23456 / CCUG 17765 / NCTC 10094 / 16M).